The chain runs to 364 residues: MAGETTKLDLSVKAVGWGAADASGVLQPIKFYRRVPGERDVKIRVLYSGVCNFDMEMVRNKWGFTRYPYVFGHETAGEVVEVGSKVEKFKVGDKVAVGCMVGSCGQCYNCQSGMENYCPEPNMADGSVYREQGERSYGGCSNVMVVDEKFVLRWPENLPQDKGVALLCAGVVVYSPMKHLGLDKPGKHIGVFGLGGLGSVAVKFIKAFGGKATVISTSRRKEKEAIEEHGADAFVVNTDSEQLKALAGTMDGVVDTTPGGRTPMSLMLNLLKFDGAVMLVGAPESLFELPAAPLIMGRKKIIGSSTGGLKEYQEMLDFAAKHNIVCDTEVIGIDYLSTAMERIKNLDVKYRFAIDIGNTLKFEE.

Residue Cys-51 participates in Zn(2+) binding. Asn-52 contributes to the NADP(+) binding site. Zn(2+)-binding residues include His-73, Glu-74, Cys-104, Cys-107, Cys-110, Cys-118, and Cys-168. Residues Leu-194, Gly-196, Leu-197, Ser-216, Thr-217, Ser-218, Lys-221, Arg-261, Val-280, Ala-282, Ser-304, Thr-306, and Arg-351 each contribute to the NADP(+) site.

Belongs to the zinc-containing alcohol dehydrogenase family. Class-III subfamily. In terms of assembly, homodimer. It depends on Zn(2+) as a cofactor. In terms of tissue distribution, expressed in leaf epidermis.

It carries out the reaction (19E)-geissoschizine + NADP(+) = 4,21-dehydrogeissoschizine + NADPH. It participates in alkaloid biosynthesis. Component of the seco-iridoid and derivatives monoterpenoid indole alkaloids (MIAs, e.g. catharanthine, tabersonine, vincadifformine, vindoline, vincristine, quinine and strychnine) biosynthesis pathway. During the conversion of strictosidine aglycone to geissoschizine, catalyzes iminium reduction on 4,21-dehydrogeissoschizine to produce 19E-geissoschizine, precursor of catharanthine and tabersonine derivatives. May also trigger the production of reactive intermediate used by the HL1, HL2, HL3 and HL4 to form catharanthine, vincadifformine and tabersonine. This Catharanthus roseus (Madagascar periwinkle) protein is Geissoschizine synthase.